The sequence spans 375 residues: MAADGDWQDFYEFQEPAGSVRDQENCNASPEAGAGAHAGGDSFPALASSLEEKLSLCFRPTSDADPPRAAVRPITERSLLQGDEIWNALTDNYGNVMPVDWKSSHTRTLHLLTLNLTEKGMSDGLPFDTSDEEELREQLDMHSIIVSCVNEEPLFTADQVIEEIEEMMQESPDLEDDETPTQSDRLSMLSQEIQTLKSSSMSSCEERVKRLSVSELNELLEEIETAIKEYSEELVQQLALRDELEFEKEVENSFISALIEVQNKQKEHKETAKKKKKLKNGSSQNGRNERSHMPGTRFSMEGISNVIQNGLRHTFGNSGGEKQYLTTVIPYEKKNGPPSVEDLQILTKILHAMKEDSEKVPSLLTDYILKVLCPT.

Residues 1-42 form a disordered region; it reads MAADGDWQDFYEFQEPAGSVRDQENCNASPEAGAGAHAGGDS. Residues Ser-130, Ser-171, and Ser-190 each carry the phosphoserine modification. The stretch at 156–177 forms a coiled coil; that stretch reads TADQVIEEIEEMMQESPDLEDD. Positions 206 to 281 form a coiled coil; sequence ERVKRLSVSE…AKKKKKLKNG (76 aa). Residues 265-297 are disordered; the sequence is QKEHKETAKKKKKLKNGSSQNGRNERSHMPGTR.

It belongs to the zygin family. As to quaternary structure, homodimer; disulfide-linked. May form heterodimers with FEZ1. Interacts with synaptotagmin.

Involved in axonal outgrowth and fasciculation. In Rattus norvegicus (Rat), this protein is Fasciculation and elongation protein zeta-2 (Fez2).